The primary structure comprises 330 residues: Aspartate--ammonia ligase (330 aa).

It belongs to the class-II aminoacyl-tRNA synthetase family. AsnA subfamily.

Its subcellular location is the cytoplasm. It catalyses the reaction L-aspartate + NH4(+) + ATP = L-asparagine + AMP + diphosphate + H(+). It functions in the pathway amino-acid biosynthesis; L-asparagine biosynthesis; L-asparagine from L-aspartate (ammonia route): step 1/1. The polypeptide is Aspartate--ammonia ligase (Streptococcus pneumoniae serotype 2 (strain D39 / NCTC 7466)).